The sequence spans 2475 residues: Gellan lyase (2475 aa).

The first 35 residues, 1–35 (MRFSWKKLVSAALVMALLVGIVYPAASGRGAVASA), serve as a signal peptide directing secretion. The Fibronectin type-III domain maps to 623 to 708 (APANVQVAIS…QPATATSPGE (86 aa)). Residues 1295 to 1518 (GAFSLTIDDN…RDQIWVGRYG (224 aa)) enclose the NodB homology domain. Residues 2111 to 2223 (QPGQQLELTV…VSTAVSLSDF (113 aa)) enclose the Cohesin domain.

Post-translationally, subject to proteolytic processing after secretion. Cleavage occurs between Gly-1205 and Leu-1206. This gives rise to a N-terminal gellan lyase of 130 kDa being the mature form of the gellan lyase. The function of C-terminal gellan lyase is not known.

The protein resides in the secreted. It catalyses the reaction Eliminative cleavage of beta-D-glucopyranosyl-(1-&gt;4)-beta-D-glucopyranosyluronate bonds of gellan backbone releasing tetrasaccharides containing a 4-deoxy-4,5-unsaturated D-glucopyranosyluronic acid at the non-reducing end. The tetrasaccharide produced from deacetylated gellan is beta-D-4-deoxy-Delta(4)-GlcAp-(1-&gt;4)-beta-D-Glcp-(1-&gt;4)-alpha-L-Rhap-(1-&gt;3)-beta-D-Glcp.. Its function is as follows. Cleaves the glycosidic bonds of gellan backbone and releases tetrasaccharide units of glucuronyl-glucosyl-rhamnosyl-glucose with unsaturated glucuronic acid at the non-reducing terminal. The enzyme is highly specific to the heteropolysaccharide gellan, especially deacetylated gellan. This is Gellan lyase from Bacillus sp.